The following is a 314-amino-acid chain: 4-hydroxy-3-methylbut-2-enyl diphosphate reductase (314 aa).

Cysteine 12 provides a ligand contact to [4Fe-4S] cluster. (2E)-4-hydroxy-3-methylbut-2-enyl diphosphate is bound by residues histidine 43 and histidine 81. Dimethylallyl diphosphate is bound by residues histidine 43 and histidine 81. Isopentenyl diphosphate contacts are provided by histidine 43 and histidine 81. Cysteine 103 serves as a coordination point for [4Fe-4S] cluster. Histidine 131 lines the (2E)-4-hydroxy-3-methylbut-2-enyl diphosphate pocket. Histidine 131 is a dimethylallyl diphosphate binding site. Isopentenyl diphosphate is bound at residue histidine 131. Glutamate 133 acts as the Proton donor in catalysis. Threonine 170 is a binding site for (2E)-4-hydroxy-3-methylbut-2-enyl diphosphate. Cysteine 198 serves as a coordination point for [4Fe-4S] cluster. Residues serine 226, asparagine 228, and serine 271 each coordinate (2E)-4-hydroxy-3-methylbut-2-enyl diphosphate. The dimethylallyl diphosphate site is built by serine 226, asparagine 228, and serine 271. Isopentenyl diphosphate contacts are provided by serine 226, asparagine 228, and serine 271.

This sequence belongs to the IspH family. [4Fe-4S] cluster is required as a cofactor.

It catalyses the reaction isopentenyl diphosphate + 2 oxidized [2Fe-2S]-[ferredoxin] + H2O = (2E)-4-hydroxy-3-methylbut-2-enyl diphosphate + 2 reduced [2Fe-2S]-[ferredoxin] + 2 H(+). The enzyme catalyses dimethylallyl diphosphate + 2 oxidized [2Fe-2S]-[ferredoxin] + H2O = (2E)-4-hydroxy-3-methylbut-2-enyl diphosphate + 2 reduced [2Fe-2S]-[ferredoxin] + 2 H(+). It participates in isoprenoid biosynthesis; dimethylallyl diphosphate biosynthesis; dimethylallyl diphosphate from (2E)-4-hydroxy-3-methylbutenyl diphosphate: step 1/1. Its pathway is isoprenoid biosynthesis; isopentenyl diphosphate biosynthesis via DXP pathway; isopentenyl diphosphate from 1-deoxy-D-xylulose 5-phosphate: step 6/6. Functionally, catalyzes the conversion of 1-hydroxy-2-methyl-2-(E)-butenyl 4-diphosphate (HMBPP) into a mixture of isopentenyl diphosphate (IPP) and dimethylallyl diphosphate (DMAPP). Acts in the terminal step of the DOXP/MEP pathway for isoprenoid precursor biosynthesis. The chain is 4-hydroxy-3-methylbut-2-enyl diphosphate reductase from Bacillus licheniformis (strain ATCC 14580 / DSM 13 / JCM 2505 / CCUG 7422 / NBRC 12200 / NCIMB 9375 / NCTC 10341 / NRRL NRS-1264 / Gibson 46).